Reading from the N-terminus, the 66-residue chain is Moricin-2 (66 aa).

The signal sequence occupies residues 1–24; it reads MNILKLFFVFIVAMSLVSCSTAAP.

In terms of tissue distribution, expressed in fat body and to a lesser extent in hemocyte and Malpighian tubules.

It localises to the secreted. Functionally, has antibacterial activity against Gram-positive and Gram-negative bacteria. Probably acts by disturbing membrane functions with its amphipathic structure. This Bombyx mori (Silk moth) protein is Moricin-2 (MOR2).